The sequence spans 516 residues: Nucleolar complex protein 4 homolog (516 aa).

3 consecutive transmembrane segments (helical) span residues 297-317 (ACDL…ILIH), 347-367 (FFHL…LVAA), and 375-395 (LALT…CNLL).

This sequence belongs to the CBF/MAK21 family.

The protein localises to the nucleus membrane. It localises to the nucleus. It is found in the nucleolus. This Homo sapiens (Human) protein is Nucleolar complex protein 4 homolog (NOC4L).